The following is a 270-amino-acid chain: Undecaprenyl-diphosphatase 1 (270 aa).

Helical transmembrane passes span 5–25, 42–62, 89–109, 117–137, 192–212, 220–240, and 250–270; these read YYVL…PIPI, IEGF…VLLI, FFFI…GVLF, LKGV…LWII, FSFL…ITDI, TLFV…YISL, and GNLK…LIFL.

Belongs to the UppP family.

It localises to the cell membrane. It catalyses the reaction di-trans,octa-cis-undecaprenyl diphosphate + H2O = di-trans,octa-cis-undecaprenyl phosphate + phosphate + H(+). Its function is as follows. Catalyzes the dephosphorylation of undecaprenyl diphosphate (UPP). Confers resistance to bacitracin. The sequence is that of Undecaprenyl-diphosphatase 1 from Bacillus cereus (strain ATCC 14579 / DSM 31 / CCUG 7414 / JCM 2152 / NBRC 15305 / NCIMB 9373 / NCTC 2599 / NRRL B-3711).